The sequence spans 77 residues: DNA-directed RNA polymerase subunit Rpo5 (77 aa).

It belongs to the archaeal Rpo5/eukaryotic RPB5 RNA polymerase subunit family. As to quaternary structure, part of the RNA polymerase complex.

It is found in the cytoplasm. It catalyses the reaction RNA(n) + a ribonucleoside 5'-triphosphate = RNA(n+1) + diphosphate. Its function is as follows. DNA-dependent RNA polymerase (RNAP) catalyzes the transcription of DNA into RNA using the four ribonucleoside triphosphates as substrates. The polypeptide is DNA-directed RNA polymerase subunit Rpo5 (Methanosphaera stadtmanae (strain ATCC 43021 / DSM 3091 / JCM 11832 / MCB-3)).